Reading from the N-terminus, the 61-residue chain is Metallothionein-1F (61 aa).

Position 1 is an N-acetylmethionine (Met-1). Positions 1-29 are beta; that stretch reads MDPNCSCAAGVSCTCAGSCKCKECKCTSC. The a divalent metal cation site is built by Cys-5, Cys-7, Cys-13, Cys-15, Cys-19, Cys-21, Cys-24, Cys-26, Cys-29, Cys-33, Cys-34, Cys-36, Cys-37, Cys-41, Cys-44, Cys-48, Cys-50, and Cys-57. Residues 30–61 are alpha; it reads KKSCCSCCPVGCSKCAQGCVCKGASEKCSCCD. Phosphoserine is present on Ser-58. A divalent metal cation-binding residues include Cys-59 and Cys-60.

Belongs to the metallothionein superfamily. Type 1 family. As to quaternary structure, monomer.

Metallothioneins have a high content of cysteine residues that bind various heavy metals; these proteins are transcriptionally regulated by both heavy metals and glucocorticoids. The sequence is that of Metallothionein-1F (MT1F) from Homo sapiens (Human).